The sequence spans 652 residues: 2-oxoglutarate carboxylase large subunit (652 aa).

The region spanning 26–288 is the Pyruvate carboxyltransferase domain; sequence ILITDLTPRD…DTGIDMKKLD (263 aa). Substrate is bound by residues 34-38 and Arg-105; that span reads RDGQQ. A divalent metal cation is bound at residue Asp-35. Residues Lys-196, His-227, and His-229 each coordinate a divalent metal cation. Lys-196 carries the N6-carboxylysine modification. Thr-362 is a binding site for substrate. The Biotinyl-binding domain maps to 563 to 643; that stretch reads AEEKGIPKAT…TPDDALLRIK (81 aa). Lys-609 is subject to N6-biotinyllysine.

As to quaternary structure, heterohexadecamer of 8 large subunits and 8 small subunits. Requires Mg(2+) as cofactor. It depends on Mn(2+) as a cofactor. The cofactor is Co(2+). In terms of processing, biotinylated.

It carries out the reaction hydrogencarbonate + 2-oxoglutarate + ATP = (S)-oxalosuccinate + ADP + phosphate + H(+). This is 2-oxoglutarate carboxylase large subunit from Hydrogenobacter thermophilus (strain DSM 6534 / IAM 12695 / TK-6).